A 333-amino-acid polypeptide reads, in one-letter code: tRNA(Ile)-lysidine synthase (333 aa).

33–38 provides a ligand contact to ATP; that stretch reads SGGADS.

Belongs to the tRNA(Ile)-lysidine synthase family.

Its subcellular location is the cytoplasm. The enzyme catalyses cytidine(34) in tRNA(Ile2) + L-lysine + ATP = lysidine(34) in tRNA(Ile2) + AMP + diphosphate + H(+). In terms of biological role, ligates lysine onto the cytidine present at position 34 of the AUA codon-specific tRNA(Ile) that contains the anticodon CAU, in an ATP-dependent manner. Cytidine is converted to lysidine, thus changing the amino acid specificity of the tRNA from methionine to isoleucine. The chain is tRNA(Ile)-lysidine synthase from Salinispora tropica (strain ATCC BAA-916 / DSM 44818 / JCM 13857 / NBRC 105044 / CNB-440).